A 1073-amino-acid polypeptide reads, in one-letter code: Guanylyl cyclase C (1073 aa).

Positions 1 to 23 (MKTPLLALALWSLLLQLGLTFWP) are cleaved as a signal peptide. The Extracellular segment spans residues 24–433 (SSVSQNCHNG…IPGRGPQILM (410 aa)). Asparagine 32, asparagine 43, asparagine 79, asparagine 195, asparagine 284, asparagine 307, and asparagine 402 each carry an N-linked (GlcNAc...) asparagine glycan. The chain crosses the membrane as a helical span at residues 434–454 (IAVFTLTGTIVLLLLIALLVL). The Cytoplasmic portion of the chain corresponds to 455–1073 (RKYKREYALR…NTTDNESTHF (619 aa)). One can recognise a Protein kinase domain in the interval 489 to 749 (LKIDDDRRRD…KIENTLAKIF (261 aa)). The 131-residue stretch at 824-954 (TIYFSDIVGF…DTVNTASRME (131 aa)) folds into the Guanylate cyclase domain.

Belongs to the adenylyl cyclase class-4/guanylyl cyclase family. In terms of assembly, homotrimer. Interacts via its C-terminal region with NHERF4. Interacts with the lectin chaperone VIP36. Glycosylation at Asn-79 is required for interaction with VIP36 while glycosylation at Asn-402 modulates ligand-mediated GC-C activation.

The protein resides in the cell membrane. The protein localises to the endoplasmic reticulum membrane. The catalysed reaction is GTP = 3',5'-cyclic GMP + diphosphate. In terms of biological role, guanylyl cyclase that catalyzes synthesis of cyclic GMP (cGMP) from GTP. The chain is Guanylyl cyclase C (GUCY2C) from Sus scrofa (Pig).